The sequence spans 535 residues: Arylsulfatase K (535 aa).

An N-terminal signal peptide occupies residues 1-22 (MLLLWLSVFAASALAAPDRGAG). Residues D44 and C84 each coordinate Ca(2+). The Nucleophile role is filled by C84. A 3-oxoalanine (Cys) modification is found at C84. N112 is a glycosylation site (N-linked (GlcNAc...) asparagine). Residue K132 coordinates substrate. Residue N197 is glycosylated (N-linked (GlcNAc...) asparagine). H255 contacts substrate. N266 carries N-linked (GlcNAc...) asparagine glycosylation. 2 residues coordinate Ca(2+): D317 and H318. N379, N417, and N502 each carry an N-linked (GlcNAc...) asparagine glycan.

The protein belongs to the sulfatase family. Requires Ca(2+) as cofactor. The conversion to 3-oxoalanine (also known as C-formylglycine, FGly), of a serine or cysteine residue in prokaryotes and of a cysteine residue in eukaryotes, is critical for catalytic activity. Post-translationally, the 75-kDa precursor undergoes proteolytic processing to yield a 23 kDa form. In terms of processing, N-glycosylated with both high mannose and complex type sugars.

It is found in the secreted. The protein localises to the lysosome. It catalyses the reaction an aryl sulfate + H2O = a phenol + sulfate + H(+). The catalysed reaction is Hydrolysis of the 2-sulfate groups of the 2-O-sulfo-D-glucuronate residues of chondroitin sulfate, heparin and heparitin sulfate.. Catalyzes the hydrolysis of pseudosubstrates such as p-nitrocatechol sulfate and p-nitrophenyl sulfate. Catalyzes the hydrolysis of the 2-sulfate groups of the 2-O-sulfo-D-glucuronate residues of chondroitin sulfate, heparin and heparitin sulfate. Acts selectively on 2-sulfoglucuronate and lacks activity against 2-sulfoiduronate. The sequence is that of Arylsulfatase K (ARSK) from Canis lupus familiaris (Dog).